The chain runs to 353 residues: Phospho-N-acetylmuramoyl-pentapeptide-transferase (353 aa).

10 consecutive transmembrane segments (helical) span residues I13 to L33, T66 to I86, F88 to F108, L130 to F150, P162 to S182, G193 to T213, I229 to Y249, V256 to I276, I281 to V301, and K330 to L350.

It belongs to the glycosyltransferase 4 family. MraY subfamily. Mg(2+) serves as cofactor.

It is found in the cell inner membrane. It catalyses the reaction UDP-N-acetyl-alpha-D-muramoyl-L-alanyl-gamma-D-glutamyl-meso-2,6-diaminopimeloyl-D-alanyl-D-alanine + di-trans,octa-cis-undecaprenyl phosphate = di-trans,octa-cis-undecaprenyl diphospho-N-acetyl-alpha-D-muramoyl-L-alanyl-D-glutamyl-meso-2,6-diaminopimeloyl-D-alanyl-D-alanine + UMP. It participates in cell wall biogenesis; peptidoglycan biosynthesis. Its function is as follows. Catalyzes the initial step of the lipid cycle reactions in the biosynthesis of the cell wall peptidoglycan: transfers peptidoglycan precursor phospho-MurNAc-pentapeptide from UDP-MurNAc-pentapeptide onto the lipid carrier undecaprenyl phosphate, yielding undecaprenyl-pyrophosphoryl-MurNAc-pentapeptide, known as lipid I. This is Phospho-N-acetylmuramoyl-pentapeptide-transferase from Sulfurimonas denitrificans (strain ATCC 33889 / DSM 1251) (Thiomicrospira denitrificans (strain ATCC 33889 / DSM 1251)).